Consider the following 720-residue polypeptide: DNA replication licensing factor mcm7-A (720 aa).

The C4-type zinc-finger motif lies at Cys-183–Cys-210. The MCM domain maps to Phe-331–Thr-537. Tyr-344, Gly-383, Ala-385, Lys-386, Ser-387, Asn-488, Arg-513, and Arg-603 together coordinate ATP. An Arginine finger motif is present at residues Ser-512–Asp-515.

The protein belongs to the MCM family. As to quaternary structure, component of the mcm2-7 complex (RLF-M). The complex forms a toroidal hexameric ring with the proposed subunit order mcm2-mcm6-mcm4-mcm7-mcm3-mcm5. The heterodimer of mmcm3/mcm5 interacts with mcm4, mmcm6, mcm7 and weakly with mcm2. The N-terminus is required for interaction with mmcm3, though this interaction may not be direct, and remains in a complex with mmcm3 throughout the cell cycle. Begins to associate with zmcm6 at the neurula stage. Component of the replisome complex. Component of the CMG helicase complex, composed of the mcm2-7 complex, the GINS complex and cdc45. Post-translationally, ubiquitinated by traip when forks converge following formation of DNA interstrand cross-links. Ubiquitinated via 'Lys-6'- and 'Lys-63'-linked polyubiquitination by traip. Short ubiquitin chains on mcm7 promote recruitment of DNA glycosylase neil3. If the interstrand cross-link cannot be cleaved by neil3, the ubiquitin chains continue to grow on mcm7, promoting the unloading of the CMG helicase complex by the vcp/p97 ATPase.

It localises to the nucleus. Its subcellular location is the chromosome. The catalysed reaction is ATP + H2O = ADP + phosphate + H(+). Functionally, acts as a component of the mcm2-7 complex (mcm complex) which is the putative replicative helicase essential for 'once per cell cycle' DNA replication initiation and elongation in eukaryotic cells. The active ATPase sites in the mcm2-7 ring are formed through the interaction surfaces of two neighboring subunits such that a critical structure of a conserved arginine finger motif is provided in trans relative to the ATP-binding site of the Walker A box of the adjacent subunit. The six ATPase active sites, however, are likely to contribute differentially to the complex helicase activity. The existence of maternal and zygotic forms of mcm3 and mcm6 suggests that specific forms of mcm2-7 complexes may be used during different stages of development. This chain is DNA replication licensing factor mcm7-A (mcm7-a), found in Xenopus laevis (African clawed frog).